The primary structure comprises 122 residues: Large ribosomal subunit protein uL14 (122 aa).

Belongs to the universal ribosomal protein uL14 family. In terms of assembly, part of the 50S ribosomal subunit. Forms a cluster with proteins L3 and L19. In the 70S ribosome, L14 and L19 interact and together make contacts with the 16S rRNA in bridges B5 and B8.

Functionally, binds to 23S rRNA. Forms part of two intersubunit bridges in the 70S ribosome. This Salinispora tropica (strain ATCC BAA-916 / DSM 44818 / JCM 13857 / NBRC 105044 / CNB-440) protein is Large ribosomal subunit protein uL14.